The sequence spans 215 residues: Cytidylate kinase (215 aa).

Position 10-18 (G10–T18) interacts with ATP.

The protein belongs to the cytidylate kinase family. Type 1 subfamily.

The protein resides in the cytoplasm. The enzyme catalyses CMP + ATP = CDP + ADP. It carries out the reaction dCMP + ATP = dCDP + ADP. This Bartonella quintana (strain Toulouse) (Rochalimaea quintana) protein is Cytidylate kinase.